We begin with the raw amino-acid sequence, 872 residues long: MSGRDNRGAGGGGGGGGGGSGGGHHHHQPLSSAMGKLKEKLTRVGDDLGYHRVESNLSTSNTATSLDTILPEDPFLFPQEAPQRHPQQSPSQSQQQQRRFLDDEPPLSFRPLLEDDDINEPPTQQQPQQQHQQQHRSPLSASGSLELTPLPPPPTTLEPRDRQQRSIPGEDLQRSKQSLKGSRVSFEKTNSKQAAESSDEDSFEDKRIGFQQQKATSVDHKGILKDLKHILANDNRRQFQAKKHVSLDVKGTRFLQDLLKESSSEEEFHKTRREFQGRKHQSLDPRVTFKLDKVLQGSSTDSDEEGDDAEHKRLIHRPKDITKPVIIDLKDLESESDEDFLTSRQHFQQQRSISTDSRKSRRLYEMDDMGNKRGDNIRHAVPFVRQITEDGKPKLEVYRPTTNPIYIWTQVLAALSVSLGSLVVGFVSAYTSPALITMTNGNITSFEVTPQAASWVGGIMPLAGLLGGIAGGPFIEYLGRRNTILTTAVPFIVSSLLIACAVNITMVLLGRFLAGFCVGIASLSLPVYLGETVQPEVRGTLGLLPTAFGNIGILLCFVAGTYMDWSMLAFLGAALPVPFLILMFLIPETPRWYVSRGREERARKALSWLRGKEADVEPELKGLLRSQADADRSATQNTMLELLKRNNLKPLSISLGLMFFQQLSGINAVIFYTVQIFKDAGSTIDGNVCTIIVGIVNFMATFIGIILIDRAGRKILLYVSNVAMIITLFVLGGFFYCKDKAGIDVSNVGWLPLSCFVVYILGFSLGFGPIPWLMMGEILPAKIRGSAASVATAFNWTCTFVVTKTFQDMLDVIGSYGAFWLFGAICFIGLFFVIIYVPETQGKTLEDIERKMMGRVRRMSSVANIKPLSFNM.

4 disordered regions span residues 1–40 (MSGR…LKEK), 53–217 (VESN…KATS), 262–281 (SSSE…RKHQ), and 293–315 (KVLQ…KRLI). At 1 to 406 (MSGRDNRGAG…VYRPTTNPIY (406 aa)) the chain is on the cytoplasmic side. Gly residues predominate over residues 8 to 22 (GAGGGGGGGGGGSGG). Low complexity-rich tracts occupy residues 55-68 (SNLS…SLDT), 84-98 (RHPQ…QQQR), and 121-132 (PPTQQQPQQQHQ). 3 positions are modified to phosphoserine: Ser262, Ser263, and Ser264. Ser334 and Ser336 each carry phosphoserine. The interval 340–361 (FLTSRQHFQQQRSISTDSRKSR) is disordered. The segment covering 344-355 (RQHFQQQRSIST) has biased composition (polar residues). The helical transmembrane segment at 407 to 427 (IWTQVLAALSVSLGSLVVGFV) threads the bilayer. Residues 428–454 (SAYTSPALITMTNGNITSFEVTPQAAS) lie on the Extracellular side of the membrane. A glycan (N-linked (GlcNAc...) asparagine) is linked at Asn442. A helical membrane pass occupies residues 455-475 (WVGGIMPLAGLLGGIAGGPFI). Topologically, residues 476–488 (EYLGRRNTILTTA) are cytoplasmic. The helical transmembrane segment at 489–509 (VPFIVSSLLIACAVNITMVLL) threads the bilayer. Topologically, residues 510-511 (GR) are extracellular. Residues 512–532 (FLAGFCVGIASLSLPVYLGET) traverse the membrane as a helical segment. The Cytoplasmic segment spans residues 533–538 (VQPEVR). The helical transmembrane segment at 539–559 (GTLGLLPTAFGNIGILLCFVA) threads the bilayer. The Extracellular portion of the chain corresponds to 560–566 (GTYMDWS). The helical transmembrane segment at 567–587 (MLAFLGAALPVPFLILMFLIP) threads the bilayer. The Cytoplasmic portion of the chain corresponds to 588 to 650 (ETPRWYVSRG…ELLKRNNLKP (63 aa)). The chain crosses the membrane as a helical span at residues 651-671 (LSISLGLMFFQQLSGINAVIF). Over 672 to 687 (YTVQIFKDAGSTIDGN) the chain is Extracellular. A helical transmembrane segment spans residues 688-708 (VCTIIVGIVNFMATFIGIILI). The Cytoplasmic segment spans residues 709–714 (DRAGRK). Residues 715–735 (ILLYVSNVAMIITLFVLGGFF) traverse the membrane as a helical segment. Residues 736-755 (YCKDKAGIDVSNVGWLPLSC) lie on the Extracellular side of the membrane. The helical transmembrane segment at 756–776 (FVVYILGFSLGFGPIPWLMMG) threads the bilayer. The Cytoplasmic segment spans residues 777–784 (EILPAKIR). A helical membrane pass occupies residues 785–803 (GSAASVATAFNWTCTFVVT). The Extracellular portion of the chain corresponds to 804 to 816 (KTFQDMLDVIGSY). The helical transmembrane segment at 817–837 (GAFWLFGAICFIGLFFVIIYV) threads the bilayer. At 838 to 872 (PETQGKTLEDIERKMMGRVRRMSSVANIKPLSFNM) the chain is on the cytoplasmic side. 2 positions are modified to phosphoserine: Ser860 and Ser861.

It belongs to the major facilitator superfamily. Sugar transporter (TC 2.A.1.1) family. Trehalose transporter subfamily.

It localises to the cell membrane. Low-capacity facilitative transporter for trehalose. Does not transport maltose, sucrose or lactose. Mediates the bidirectional transfer of trehalose. Responsible for the transport of trehalose synthesized in the fat body and the incorporation of trehalose into other tissues that require a carbon source, thereby regulating trehalose levels in the hemolymph. The polypeptide is Facilitated trehalose transporter Tret1 (Drosophila willistoni (Fruit fly)).